The primary structure comprises 869 residues: Rho GTPase-activating protein 27 (869 aa).

An SH3 domain is found at 6–69; it reads EGDVYVLVEH…PAQYVRELPA (64 aa). Ala-28 is subject to Phosphotyrosine. The interval 104-134 is disordered; it reads GADGSSAEPRGRASSLCGPARQRTGGQRNSL. Ser-155, Ser-215, and Ser-249 each carry phosphoserine. Disordered regions lie at residues 208-300 and 331-401; these read RCPP…SGES and ETEE…GWSC. Basic and acidic residues predominate over residues 209–220; sequence CPPRAESPKQVD. The segment covering 235 to 250 has biased composition (low complexity); sequence RATSPRSAAAPPRLSP. One can recognise a WW 1 domain in the interval 246-280; it reads PRLSPVWETHTDTGTGRPYYYNPDTGVTTWESPFE. The segment covering 283–294 has biased composition (polar residues); that stretch reads EGTTSPATSRAS. The region spanning 299 to 333 is the WW 2 domain; the sequence is ESLETEWGQYWDEESRRVFFYNPLTGETAWEDETE. Residues 345–356 are compositionally biased toward polar residues; sequence MQPSLSPRSPGQ. At Ser-350 the chain carries Phosphoserine. The WW 3 domain occupies 414–447; it reads QFTQEQWVRLEDQHGKPYFYNPEDSSVQWELPQV. Disordered regions lie at residues 449-477 and 623-642; these read IPAPRSVRKSSQDSDTPAQASPPEEKIKT and EEDVRQNAASPSLSPGGLES. Residues Ser-459 and Ser-462 each carry the phosphoserine modification. Thr-464 is modified (phosphothreonine). Ser-469 carries the phosphoserine modification. In terms of domain architecture, PH spans 477-593; it reads TLDKAGVLHR…WHKAIAEGIS (117 aa). Phosphoserine occurs at positions 632 and 636. Positions 677 to 866 constitute a Rho-GAP domain; it reads CALAQLCERE…LILHQCADIF (190 aa).

In terms of assembly, interacts with SH3KBP1/CIN85. Widely expressed. Highly expressed in kidney, lung, small intestine and thymus.

The protein resides in the cytoplasm. Its subcellular location is the membrane. Rho GTPase-activating protein which may be involved in clathrin-mediated endocytosis. GTPase activators for the Rho-type GTPases act by converting them to an inactive GDP-bound state. Has activity toward CDC42 and RAC1. This Mus musculus (Mouse) protein is Rho GTPase-activating protein 27 (Arhgap27).